We begin with the raw amino-acid sequence, 121 residues long: Large ribosomal subunit protein uL22 (121 aa).

This sequence belongs to the universal ribosomal protein uL22 family. As to quaternary structure, part of the 50S ribosomal subunit.

This protein binds specifically to 23S rRNA; its binding is stimulated by other ribosomal proteins, e.g. L4, L17, and L20. It is important during the early stages of 50S assembly. It makes multiple contacts with different domains of the 23S rRNA in the assembled 50S subunit and ribosome. Its function is as follows. The globular domain of the protein is located near the polypeptide exit tunnel on the outside of the subunit, while an extended beta-hairpin is found that lines the wall of the exit tunnel in the center of the 70S ribosome. The polypeptide is Large ribosomal subunit protein uL22 (Beutenbergia cavernae (strain ATCC BAA-8 / DSM 12333 / CCUG 43141 / JCM 11478 / NBRC 16432 / NCIMB 13614 / HKI 0122)).